The sequence spans 2531 residues: MDISETEYNDSDPPVQENGNGKAVVEDEVNDEESNMETVDLGLDDKTSDASSQNVFKNIDNEPSDDQQNVEESENITLEKPEEISAPPTVVSTSQDVSPPPAIESLPPLLEGKELELEDDVTSSLPRLLSKTTLIHSNEEGADETIQRLISSLHSNSPNMDRTQIVDHLFNLLVGGHFDQESKFVIEHVANVDHMLTLLSHCDCDLQNEIWSLFLAVMKKSNRNLEACTRVGLISKNFFLNLVLDLLPEAPPLLADLLVQIIAALVAYSINVKQTKHLLRALRSTKDQWPPNSLKLLHVLKEMPQHDSADVFFSFPGKDQSGIILPPIKTMPYQQGWTFATWLRMEPLNSVTFEKEQPVLYSFRTSKGIGYSCHIFGNCLVVNVEKAKGKEQSRCVKAELGARKWHHIAIAHCYSRWGRSDIKCFIDGQLAETIELSWVVTSTTSWDRCSIGVSADGAVNTAFCGQMGAMYLFAESLSLQQANSLFCLGPAYQSTFKHDSETSLPEGYKKHLFDGHLHSSLVFAYCPKNCHGQLCLFTPPKTAANTYFVQIPHAVMKEGVEVITTHSIHKSLQSVGGIQILLPLFAQIDLPSSHDNTIDGDVCQTLLSLISLLLSSSQSSQQQLFHSKGFLIISSCLQEASPSHLSMKVLEQIIHIAKFLLRCPAGGPLLKHLFDYILFNPKLWIRARPEVQVHLYQYLATDFLANNNFSQMLRRVPTVIEMCHTLKHFYWLALPQTVSDYTVEERPENFATAEIVSIRSAILTFINRIIISSNSPDEEEKARDQEIHTLLNLLATVREDDNLYDVLALVTRLLAEHPAIMIPAIDKNKALGIIFNLLAAPNELIRIPALKILGFFLSRSTLKRKTESMGSQNLFSLIGERLLSHKRTISLPTYNVLLEVLVEQMTPTFTYAAHQPAQPDWKFENPHLLKVIAHVISQCEETESLVQIKKCFLIDIINLCRESKENRRTILQMSVWQDWLIGLAYVFHTSESQNEVSELVWEAFSILLHHALRHEYGGWRVWVDTLAIAHSKVSYEKFKRRLAEAKAKAEKAETGEEAKMEPTPVYRAPEFAWSEVHIRLLADLLSGIERTVEEWKTQEGGISDQCNASENQVFVGNVVHVISQLADSLIMACGGLLPLLASATAPNNDMEIVDPCQQQLPISVAASFLMRFAKLVDTFVLASGVSFSELEQEKNMPAGGVLRQSLRISATVTVRHILASRIQQPDTPRYETNSAKKNQCIMDFVKEALENFSPEGLENVERLVQDSDITRIKGVVYRDMVEENRQAQFLALSVIYLVSVLMVSRYRDILEPPSSPSPFFDSTTTKQENAERGEKLFEFSHNPLFLELPESSSEAVANGKVANDGDHASIKNGSDHSENGADEETEEKGEQGQGDNGGTIAAIKVANSDMKNDGNEYNEEELKKMHQSNGRRPSTLMPPQQTAERRAYLTTKLQTALETCAPLLREMMSDFRGYLQKTLVGTHGQEIMNDTKVLETLRNRNASVIELVMLLCSQEWQTSLQKHAGLAFIELVNEGRLMAHATRDHVLRVANEADFILNRLRAEDVSKHAQFEAESREQLNARYEEYSRCDLLIVSGRLRDSLNATRLLDKMSAILTDGDDSKSGSQFWKLDVWEDDSRRRKRFVPNPYGSRHEEANLPEGEKNEEPEISEQERIRKILKGLFSQRHATTTSTGGQELVDESDIDKWAQEVDPTPSSQSACFSTAAKLIVPGVVVPGTLSVTASDLFFDANESDPNYKKQCAQVLRYCEALHARWNLQEIRAIFLRRYLLQNTALEMFLASRTAIMFAFDSEDTVRKVVYQLPRVGVGVKYGLPQSRKTSLMTPRQLFKHSDMCAKWQKREISNFDYLMFLNTVAGRTFNDLSQYPVFPWILTNYTSDTLDLSVASNFRDLSKPIGALNEARRKFFTDRYASWDDDLVPAFHYGTHYSTPAFTLNWLLRLEPFASMFINLHDGKFDHPDRITHSIKDSWDRCQRDSHDVKELIPELFYLPEMFRNSSKFNLGRRADGTLVDDVVLPPWAESPEHFVLMHRQALESDLVSCQLNQWIDLIFGYKQRGAEAVRATNVFYHLTYEGTVTQKMAETPGQVSAIEQQILSFGQTPSQLLAEAHPPRHSIMTMAPTMFRRHDDDLCMMMKYISNSPVVYLAANTFHQLPHPTVVGVAQNLVFSLNKWDNSYSYGSTQRSALSMDPSNVEGQVALPLTADPQLATAASTTPIARRHLGDAFDQRLQVQCSNFVTTTDSKYIFACGYPDYSFRIVDTDSGRVRQAVYGHGDVVTCIARSETSLFSDCYVVTGSMDCTVVLWHWNGTTGFIAGEYNQPGEVPSPRSILTGHEASISALCVSAEHGLVVSGCEDGVILIHTTASDLLRRIRGHGTVTQLSMSRECILLVLFDSKRMTTYSSTARKLNEVLSEEKIECVTVTRDGEFAVTGAVNGRITIWRMFPLNKLYTYQPLNSAVRSVAVVASHRFILGGLDSGAIVVFNADFNRWHYEYKHRYIQNSSATKPAQASPQK.

Composition is skewed to acidic residues over residues 1 to 10 (MDISETEYND), 26 to 35 (EDEVNDEESN), and 62 to 74 (EPSD…EESE). 4 disordered regions span residues 1 to 101 (MDIS…SPPP), 1363 to 1398 (NDGD…DNGG), 1420 to 1440 (EELK…MPPQ), and 1642 to 1670 (RFVP…EISE). Residues 1363–1379 (NDGDHASIKNGSDHSEN) show a composition bias toward basic and acidic residues. The span at 1427 to 1440 (QSNGRRPSTLMPPQ) shows a compositional bias: polar residues. Residues 1650 to 1670 (SRHEEANLPEGEKNEEPEISE) show a composition bias toward basic and acidic residues. The region spanning 1714 to 1822 (PSSQSACFST…TVRKVVYQLP (109 aa)) is the BEACH-type PH domain. Positions 1841-2130 (MTPRQLFKHS…QLLAEAHPPR (290 aa)) constitute a BEACH domain. 4 WD repeats span residues 2289–2332 (GHGD…GFIA), 2350–2389 (GHEA…LRRI), 2429–2468 (LSEE…KLYT), and 2471–2510 (PLNS…WHYE).

This sequence belongs to the WD repeat neurobeachin family. In terms of assembly, interacts with RII subunit of PKA.

It localises to the cytoplasm. It is found in the membrane. Its subcellular location is the nucleus. In terms of biological role, binds to type II regulatory subunits of protein kinase A and anchors/targets them to the membrane. May anchor the kinase to cytoskeletal and/or organelle-associated proteins. Regulates endosomal traffic in polarized epithelial cells such as the vulval precursor cells and intestinal cells. Thought to act as a negative regulator of lin-12 activity in vulval precursor cells. May have a role in the internalization process from basolateral surface of polarized epithelial cells. The polypeptide is Putative neurobeachin homolog (Caenorhabditis briggsae).